The sequence spans 338 residues: DNA-directed RNA polymerase subunit alpha (338 aa).

The interval 1–226 (MLIAQRPTLT…ELFGLTRELN (226 aa)) is alpha N-terminal domain (alpha-NTD). The alpha C-terminal domain (alpha-CTD) stretch occupies residues 243-338 (YAESLGTPVE…DDDYAETEQY (96 aa)). Residues 319–338 (AAAEAYDEANDDDYAETEQY) are disordered. A compositionally biased stretch (acidic residues) spans 323 to 338 (AYDEANDDDYAETEQY).

It belongs to the RNA polymerase alpha chain family. Homodimer. The RNAP catalytic core consists of 2 alpha, 1 beta, 1 beta' and 1 omega subunit. When a sigma factor is associated with the core the holoenzyme is formed, which can initiate transcription.

It carries out the reaction RNA(n) + a ribonucleoside 5'-triphosphate = RNA(n+1) + diphosphate. In terms of biological role, DNA-dependent RNA polymerase catalyzes the transcription of DNA into RNA using the four ribonucleoside triphosphates as substrates. This chain is DNA-directed RNA polymerase subunit alpha, found in Cutibacterium acnes (strain DSM 16379 / KPA171202) (Propionibacterium acnes).